Reading from the N-terminus, the 508-residue chain is WD repeat-containing protein JIP5 (508 aa).

WD repeat units follow at residues 46–94, 105–144, 150–189, 194–234, 252–293, and 344–381; these read LATG…GVET, RHKG…VVKK, GQNV…QTNL, HNGD…EGDF, DQED…LADQ, and SKLD…QLTP. The tract at residues 372-508 is disordered; it reads DSEKSEQLTP…THGIRRFEGL (137 aa). Over residues 491-508 the composition is skewed to basic and acidic residues; sequence IKPERSMKTHGIRRFEGL.

Belongs to the WD repeat WDR55 family.

Its subcellular location is the nucleus. It is found in the nucleolus. In Eremothecium gossypii (strain ATCC 10895 / CBS 109.51 / FGSC 9923 / NRRL Y-1056) (Yeast), this protein is WD repeat-containing protein JIP5 (JIP5).